Here is a 251-residue protein sequence, read N- to C-terminus: Fibroblast growth factor 23 (251 aa).

The signal sequence occupies residues 1–24; sequence MLGARLRLWVCALCSVCSMSVLRA. Cysteine 95 and cysteine 113 are oxidised to a cystine. Threonine 171 and threonine 178 each carry an O-linked (GalNAc) threonine glycan. The interval 172 to 221 is disordered; the sequence is PIPRRHTRSAEDDSERDPLNVLKPRARMTPAPASCSQELPSAEDNSPMAS. Serine 180 bears the Phosphoserine; by FAM20C mark. Residues 205–219 are compositionally biased toward polar residues; sequence SCSQELPSAEDNSPM.

It belongs to the heparin-binding growth factors family. Interacts with FGFR1, FGFR2, FGFR3 and FGFR4. Affinity between fibroblast growth factors (FGFs) and their receptors is increased by KL and heparan sulfate glycosaminoglycans that function as coreceptors. Following secretion this protein is inactivated by cleavage into a N-terminal fragment and a C-terminal fragment. The processing is effected by proprotein convertases. Post-translationally, O-glycosylated at Thr-171 and Thr-178 by GALNT3 and glycosylation of Thr-178 requires previous glycosylation at Thr171. Glycosylation is necessary for secretion; it blocks processing by proprotein convertases when the O-glycan is alpha 2,6-sialylated. Competition between proprotein convertase cleavage and block of cleavage by O-glycosylation determines the level of secreted active FGF23. In terms of processing, phosphorylation at Ser-180 mediated by FAM20C slows down glycosylation at Thr-178 notably. In terms of tissue distribution, expressed in osteogenic cells particularly during phases of active bone remodeling. In adult trabecular bone, expressed in osteocytes and flattened bone-lining cells (inactive osteoblasts).

The protein localises to the secreted. Regulator of phosphate homeostasis. Inhibits renal tubular phosphate transport by reducing SLC34A1 levels. Up-regulates EGR1 expression in the presence of KL. Acts directly on the parathyroid to decrease PTH secretion. Regulator of vitamin-D metabolism. Negatively regulates osteoblast differentiation and matrix mineralization. The sequence is that of Fibroblast growth factor 23 (FGF23) from Homo sapiens (Human).